The sequence spans 227 residues: 4'-phosphopantetheinyl transferase PptT (227 aa).

Residues arginine 48, arginine 56, 75–78 (KGDK), 92–93 (TH), and aspartate 114 contribute to the CoA site. The Mg(2+) site is built by aspartate 114, alanine 115, and glutamate 116. Residues glutamate 157, lysine 161, and leucine 171 each coordinate CoA.

The protein belongs to the P-Pant transferase superfamily. Requires Mg(2+) as cofactor.

It catalyses the reaction apo-[ACP] + CoA = holo-[ACP] + adenosine 3',5'-bisphosphate + H(+). With respect to regulation, inhibited by the amidino-urea compound 1-[(2,6-diethylphenyl)-3-N-ethylcarbamimodoyl]urea (compound 8918). It acts by binding to the phosphopantetheine pocket in the active site. Inhibition by compound 8918 kills M.tuberculosis. Its function is as follows. Transfers the 4'-phosphopantetheine moiety from coenzyme A to a Ser of acyl-carrier-protein. Involved in post-translational modification of various type-I polyketide synthases required for the formation of both mycolic acids and lipid virulence factors. Acts on Pks13, Mas, PpsA, PpsB, PpsC and PpsD. Also acts on AcpM, the meromycolate extension acyl carrier protein. In addition, is involved in the activation of the acyl carrier protein MbtL and the nonribosomal peptides synthases MbtB and MbtE, which are involved in the biosynthesis of the siderophore mycobactin. Functionally, required for the replication and survival of Mycobacterium during the acute and chronic phases of infection in mice. This chain is 4'-phosphopantetheinyl transferase PptT, found in Mycobacterium tuberculosis (strain ATCC 25618 / H37Rv).